Consider the following 189-residue polypeptide: Large ribosomal subunit protein bL9 (189 aa).

This sequence belongs to the bacterial ribosomal protein bL9 family.

Functionally, binds to the 23S rRNA. The sequence is that of Large ribosomal subunit protein bL9 from Brucella abortus (strain S19).